The chain runs to 485 residues: Glutamyl-tRNA(Gln) amidotransferase subunit A (485 aa).

Catalysis depends on charge relay system residues Lys79 and Ser154. Residue Ser178 is the Acyl-ester intermediate of the active site.

It belongs to the amidase family. GatA subfamily. Heterotrimer of A, B and C subunits.

It carries out the reaction L-glutamyl-tRNA(Gln) + L-glutamine + ATP + H2O = L-glutaminyl-tRNA(Gln) + L-glutamate + ADP + phosphate + H(+). In terms of biological role, allows the formation of correctly charged Gln-tRNA(Gln) through the transamidation of misacylated Glu-tRNA(Gln) in organisms which lack glutaminyl-tRNA synthetase. The reaction takes place in the presence of glutamine and ATP through an activated gamma-phospho-Glu-tRNA(Gln). The sequence is that of Glutamyl-tRNA(Gln) amidotransferase subunit A from Bacillus pumilus (strain SAFR-032).